Reading from the N-terminus, the 278-residue chain is 4-hydroxy-tetrahydrodipicolinate reductase (278 aa).

NAD(+) contacts are provided by residues 13–18 (GAAGKM) and 111–113 (GTT). H167 serves as the catalytic Proton donor/acceptor. Residue H168 coordinates (S)-2,3,4,5-tetrahydrodipicolinate. The Proton donor role is filled by K171. 177–178 (GT) provides a ligand contact to (S)-2,3,4,5-tetrahydrodipicolinate.

Belongs to the DapB family.

The protein resides in the cytoplasm. The enzyme catalyses (S)-2,3,4,5-tetrahydrodipicolinate + NAD(+) + H2O = (2S,4S)-4-hydroxy-2,3,4,5-tetrahydrodipicolinate + NADH + H(+). It carries out the reaction (S)-2,3,4,5-tetrahydrodipicolinate + NADP(+) + H2O = (2S,4S)-4-hydroxy-2,3,4,5-tetrahydrodipicolinate + NADPH + H(+). It functions in the pathway amino-acid biosynthesis; L-lysine biosynthesis via DAP pathway; (S)-tetrahydrodipicolinate from L-aspartate: step 4/4. Catalyzes the conversion of 4-hydroxy-tetrahydrodipicolinate (HTPA) to tetrahydrodipicolinate. This chain is 4-hydroxy-tetrahydrodipicolinate reductase, found in Mastigocladus laminosus (Fischerella sp.).